The following is a 490-amino-acid chain: MEATSSALSSTANLVKTIVGAGTLAIPYSFKSDGVLVGVILTLLAAVTSGLGLFVLSKCSKTLINPRNSSFFTLCMLTYPTLAPIFDLAMIVQCFGVGLSYLVLIGDLFPGLFGGERNYWIIASAVIIIPLCLVKKLDQLKYSSILGLFALAYISILVFSHFVFELGKGELTNILRNDICWWKIHDFKGLLSTFSIIIFAFTGSMNLFPMINELKDNSMENITFVINNSISLSTALFLIVGLSGYLTFGNETLGNLMLNYDPNSIWIVIGKFCLGSMLILSFPLLFHPLRIAVNNVIIWIEITYGGANPEEDPQVSEYTRASNLRPISMTVEDPAQPSDALDATSYNEQECLLPNGNFDNGSIESQENNNDERGTMAVAGDNEHHAPFVKSRFYWITALLLISMYTLALSVQSFALVLSFVGATGSTSISFTLPGLLGYKLIGLDSLAIGKMIPPKDRFYKRCSLLLVFYGLSVMFLSLYVTVFNRSDEA.

The Cytoplasmic segment spans residues 1–6; it reads MEATSS. A helical membrane pass occupies residues 7–27; sequence ALSSTANLVKTIVGAGTLAIP. Over 28–34 the chain is Vacuolar; the sequence is YSFKSDG. A helical transmembrane segment spans residues 35-55; it reads VLVGVILTLLAAVTSGLGLFV. Over 56 to 84 the chain is Cytoplasmic; it reads LSKCSKTLINPRNSSFFTLCMLTYPTLAP. The helical transmembrane segment at 85 to 105 threads the bilayer; it reads IFDLAMIVQCFGVGLSYLVLI. The Vacuolar segment spans residues 106-108; that stretch reads GDL. Residues 109–129 traverse the membrane as a helical segment; the sequence is FPGLFGGERNYWIIASAVIII. At 130–143 the chain is on the cytoplasmic side; it reads PLCLVKKLDQLKYS. A helical transmembrane segment spans residues 144 to 164; that stretch reads SILGLFALAYISILVFSHFVF. The Vacuolar portion of the chain corresponds to 165–190; sequence ELGKGELTNILRNDICWWKIHDFKGL. A helical membrane pass occupies residues 191-211; that stretch reads LSTFSIIIFAFTGSMNLFPMI. At 212 to 221 the chain is on the cytoplasmic side; that stretch reads NELKDNSMEN. A helical membrane pass occupies residues 222–242; it reads ITFVINNSISLSTALFLIVGL. Topologically, residues 243–264 are vacuolar; sequence SGYLTFGNETLGNLMLNYDPNS. A helical transmembrane segment spans residues 265-285; it reads IWIVIGKFCLGSMLILSFPLL. Over 286-397 the chain is Cytoplasmic; that stretch reads FHPLRIAVNN…FVKSRFYWIT (112 aa). The tract at residues 355–374 is disordered; sequence NGNFDNGSIESQENNNDERG. Over residues 357 to 368 the composition is skewed to polar residues; it reads NFDNGSIESQEN. Residues 398–418 traverse the membrane as a helical segment; that stretch reads ALLLISMYTLALSVQSFALVL. Residues 419–428 lie on the Vacuolar side of the membrane; it reads SFVGATGSTS. A helical transmembrane segment spans residues 429 to 449; sequence ISFTLPGLLGYKLIGLDSLAI. At 450 to 463 the chain is on the cytoplasmic side; the sequence is GKMIPPKDRFYKRC. The chain crosses the membrane as a helical span at residues 464-484; that stretch reads SLLLVFYGLSVMFLSLYVTVF. The Vacuolar portion of the chain corresponds to 485–490; it reads NRSDEA.

The protein belongs to the amino acid/polyamine transporter 2 family.

It localises to the vacuole membrane. Its function is as follows. Probable amino acid transporter of unknown specificity. The chain is Vacuolar amino acid transporter 7 (AVT7) from Saccharomyces cerevisiae (strain ATCC 204508 / S288c) (Baker's yeast).